A 510-amino-acid polypeptide reads, in one-letter code: ATP synthase subunit alpha (510 aa).

169–176 (GDRQTGKT) contacts ATP.

It belongs to the ATPase alpha/beta chains family. In terms of assembly, F-type ATPases have 2 components, CF(1) - the catalytic core - and CF(0) - the membrane proton channel. CF(1) has five subunits: alpha(3), beta(3), gamma(1), delta(1), epsilon(1). CF(0) has three main subunits: a(1), b(2) and c(9-12). The alpha and beta chains form an alternating ring which encloses part of the gamma chain. CF(1) is attached to CF(0) by a central stalk formed by the gamma and epsilon chains, while a peripheral stalk is formed by the delta and b chains.

It localises to the cell inner membrane. The catalysed reaction is ATP + H2O + 4 H(+)(in) = ADP + phosphate + 5 H(+)(out). Produces ATP from ADP in the presence of a proton gradient across the membrane. The alpha chain is a regulatory subunit. This Rickettsia rickettsii (strain Iowa) protein is ATP synthase subunit alpha.